The following is a 468-amino-acid chain: uncharacterized protein (468 aa).

The region spanning 1-69 is the HTH gntR-type domain; it reads MKKYQQLAEQ…PQSGYYVAPQ (69 aa). K312 carries the post-translational modification N6-(pyridoxal phosphate)lysine.

This sequence in the C-terminal section; belongs to the class-I pyridoxal-phosphate-dependent aminotransferase family.

This is an uncharacterized protein from Escherichia coli (strain K12).